Reading from the N-terminus, the 438-residue chain is tRNA modification GTPase MnmE (438 aa).

Residues Arg20, Glu78, and Lys117 each contribute to the (6S)-5-formyl-5,6,7,8-tetrahydrofolate site. In terms of domain architecture, TrmE-type G spans 214–359 (GIRVLIIGKP…LIDEIKKLFY (146 aa)). Asn224 lines the K(+) pocket. GTP contacts are provided by residues 224 to 229 (NVGKST), 243 to 249 (TDIPGTT), and 268 to 271 (DTAG). Ser228 contributes to the Mg(2+) binding site. K(+) is bound by residues Thr243, Ile245, and Thr248. Thr249 is a Mg(2+) binding site. Lys438 contributes to the (6S)-5-formyl-5,6,7,8-tetrahydrofolate binding site.

Belongs to the TRAFAC class TrmE-Era-EngA-EngB-Septin-like GTPase superfamily. TrmE GTPase family. As to quaternary structure, homodimer. Heterotetramer of two MnmE and two MnmG subunits. K(+) is required as a cofactor.

It localises to the cytoplasm. In terms of biological role, exhibits a very high intrinsic GTPase hydrolysis rate. Involved in the addition of a carboxymethylaminomethyl (cmnm) group at the wobble position (U34) of certain tRNAs, forming tRNA-cmnm(5)s(2)U34. This is tRNA modification GTPase MnmE from Ureaplasma parvum serovar 3 (strain ATCC 27815 / 27 / NCTC 11736).